Reading from the N-terminus, the 448-residue chain is Probable D-serine dehydratase (448 aa).

An N6-(pyridoxal phosphate)lysine modification is found at K119.

Belongs to the serine/threonine dehydratase family. DsdA subfamily. Requires pyridoxal 5'-phosphate as cofactor.

The catalysed reaction is D-serine = pyruvate + NH4(+). This chain is Probable D-serine dehydratase, found in Pseudomonas aeruginosa (strain UCBPP-PA14).